A 1824-amino-acid chain; its full sequence is Treslin (1824 aa).

Disordered regions lie at residues 542 to 572 (EFYQ…QKMK), 590 to 622 (AQKT…KPGL), 907 to 973 (SPSK…SGES), 1001 to 1035 (RHSS…KGKF), 1098 to 1117 (AVGC…VGDN), 1189 to 1221 (VPEN…SPEE), 1293 to 1388 (PFCN…DDDK), 1459 to 1518 (FEGK…QSSP), 1617 to 1650 (TPTH…NLNS), and 1803 to 1824 (PLCQ…KLLD). The segment covering 546–555 (SSTAGSSGSL) has biased composition (low complexity). Polar residues predominate over residues 562 to 572 (TQCTPVRQKMK). Residues 605-619 (GTEKGGKKSSGDRTK) are compositionally biased toward basic and acidic residues. Positions 907 to 921 (SPSKKSKMPRSQSVS) are enriched in polar residues. Basic and acidic residues predominate over residues 932–952 (SDVDNDDRHTLLTKKVSETPL). Composition is skewed to polar residues over residues 1005–1014 (VFYSSSQPRS) and 1103–1114 (TPQSPRTPNRTV). The span at 1319-1345 (RSGNTPVKESCSPSSNSQGITGTSPSP) shows a compositional bias: polar residues. Residues 1347–1370 (KSLSSAVAKSSPSPSFGPSRSGVG) are compositionally biased toward low complexity. Positions 1462–1472 (KQTTSTGTPLT) are enriched in polar residues. Basic and acidic residues predominate over residues 1480–1490 (TPDRRQREAEA). 2 stretches are compositionally biased toward polar residues: residues 1617–1629 (TPTH…QSPL) and 1636–1650 (SPQS…NLNS). A compositionally biased stretch (basic residues) spans 1807–1824 (PRRRRTPSRTYSRKKLLD).

The protein belongs to the treslin family. In terms of assembly, interacts with topbp1 (via BRCT domains); interaction takes place in a cdk2-dependent manner. Component of the replisome complex.

It is found in the nucleus. Functionally, regulator of DNA replication and S/M and G2/M checkpoints. Regulates the triggering of DNA replication initiation via its interaction with topbp1 by participating in cdk2-mediated loading of cdc45l onto replication origins. Required for the transition from pre-replication complex (pre-RC) to pre-initiation complex (pre-IC). Required to prevent mitotic entry after treatment with ionizing radiation. This Danio rerio (Zebrafish) protein is Treslin (ticrr).